Here is a 71-residue protein sequence, read N- to C-terminus: Beta-defensin 124 (71 aa).

The signal sequence occupies residues 1-22; sequence MTQLLLFLVALLVLGHVPSGRS. 3 cysteine pairs are disulfide-bonded: Cys-27-Cys-54, Cys-34-Cys-48, and Cys-38-Cys-55.

Belongs to the beta-defensin family.

The protein localises to the secreted. Functionally, has antibacterial activity. The polypeptide is Beta-defensin 124 (DEFB124) (Pan troglodytes (Chimpanzee)).